The sequence spans 561 residues: Liver carboxylesterase B-1 (561 aa).

The N-terminal stretch at 1-18 (MCLRSLFLVSLATCVVCG) is a signal peptide. Residue Asn79 is glycosylated (N-linked (GlcNAc...) asparagine). Cys87 and Cys116 are disulfide-bonded. The active-site Acyl-ester intermediate is the Ser221. Cysteines 273 and 284 form a disulfide. Active-site charge relay system residues include Glu353 and His466. Residues 558–561 (HNEL) carry the Prevents secretion from ER motif.

The protein belongs to the type-B carboxylesterase/lipase family. In terms of assembly, monomer.

The protein resides in the endoplasmic reticulum lumen. It catalyses the reaction a carboxylic ester + H2O = an alcohol + a carboxylate + H(+). In terms of biological role, involved in the detoxification of xenobiotics and in the activation of ester and amide prodrugs. The polypeptide is Liver carboxylesterase B-1 (Rattus norvegicus (Rat)).